Consider the following 250-residue polypeptide: MTPFRRPTVLGTSASAPFPPAEAALTDPDGLLAVGGDLSPQRLLNAYAHGIFPWYSEGQPILWWSPDPRMVFRTDGVRLSSRFKRQLRASTWTVRADTAFEQVIDACAASPRPGQDGTWITAEMQQAYIALHRLGHAHSIEVFDGARLVGGIYGVAIGRMFFGESMFSGESGGSKVALAALAANLHGRGWPLIDAQVENPHLLSLGAERLPRADFLHQVQRQVALTEPPGSWSARYGEHAASGLCETRLT.

Residues 1 to 21 (MTPFRRPTVLGTSASAPFPPA) are disordered.

It belongs to the L/F-transferase family.

Its subcellular location is the cytoplasm. It carries out the reaction N-terminal L-lysyl-[protein] + L-leucyl-tRNA(Leu) = N-terminal L-leucyl-L-lysyl-[protein] + tRNA(Leu) + H(+). The enzyme catalyses N-terminal L-arginyl-[protein] + L-leucyl-tRNA(Leu) = N-terminal L-leucyl-L-arginyl-[protein] + tRNA(Leu) + H(+). It catalyses the reaction L-phenylalanyl-tRNA(Phe) + an N-terminal L-alpha-aminoacyl-[protein] = an N-terminal L-phenylalanyl-L-alpha-aminoacyl-[protein] + tRNA(Phe). Functionally, functions in the N-end rule pathway of protein degradation where it conjugates Leu, Phe and, less efficiently, Met from aminoacyl-tRNAs to the N-termini of proteins containing an N-terminal arginine or lysine. In Xanthomonas euvesicatoria pv. vesicatoria (strain 85-10) (Xanthomonas campestris pv. vesicatoria), this protein is Leucyl/phenylalanyl-tRNA--protein transferase.